Reading from the N-terminus, the 925-residue chain is MTLWTVSPPAVSSEAEEKPVQDTVSLTAADQTWQVCVPLPIAALDFAAPHGYVGEVPLGCRVAVPWRGGEIRVGLVVGAGSSMGRHRLREALALLDSPEAPWVAPGTARGLTAWAEEAHLPPGLVWDDLLCTGWEPAHRHEVRAVPGADLSPYGETLPDTDWSRADLYPPALLDAAREQGLLDDRFLPDPPQVNRVVARDLNDVPPAARTQVVVTAQPWEAADPALCTPPHWEAVTGEGALTAKQQQAHDWLRAHGPQPSLGAWASGAKVGLPVVRKVADLGWAQEHPQAVPPPPAWKWLREHGPVASPAAWASAAGVRPAEVRRLMEGGAADYTFTPVTPPAAWAWLREHGPAETVSAWATGAGVSPSVAAGLLARGWAAQVQMPAPPPELPAAPLWAGPPLDELTALAADALPEEDRWRLHGGRPASRFAALAPRVARLLAQGRSVLILAPDHATLRRAWAGLGGLAALAGTRAALLSGQLSPRQREEIWRQVRAGDVRLVIGSALALSAPLPDLALLVVLEEGSDAYKLLSGSRAFVPDVAARVARSLRAALGLVGSVPAVESVPLPGLVLAPPRARVHVVDYAQPPAQPELGPLSSVHLTPGDLGYPISHDLARLLRQVQERGRQAALLAPRRGYSALLRCPRCDHVPGCPNCDVPLRFHQDRRQMECHQCGHHQSVPDRCDECGEQMWKARGPGTEWIAAEVEKLLPGFPVYRLDKDHQDDLAPLHAGEAGVVVGTQLLLAQPSPPNLALIGVTLADTWLGVSDFRASERYHRLLRQLAEWHPSRAPLLVVQTFQGDHPALKVLETGRDALAYPAAEERVRAELFYPPHARLAQIEVAARDRDRAKVAAQALADALHGAGAVATEVLGPAHAAVARVRGAYLYQLLLRARNDARLAELLGVLDTRSWGARVRVDVNPRST.

Cys645, Cys648, Cys654, Cys657, Cys672, Cys675, Cys685, and Cys688 together coordinate Zn(2+).

The protein belongs to the helicase family. PriA subfamily. As to quaternary structure, interacts with DnaB (DR_0549). Component of the replication restart primosome. The cofactor is Zn(2+).

Its function is as follows. Initiates the restart of stalled replication forks, which reloads the replicative helicase on sites other than the origin of replication. Recognizes abandoned replication forks and remodels them to uncover a helicase loading site. Promotes assembly of the primosome at these replication forks. Recognizes and binds DNA at stalled replication forks, also binds single-stranded (ss)DNA. The chain is Probable replication restart protein PriA from Deinococcus radiodurans (strain ATCC 13939 / DSM 20539 / JCM 16871 / CCUG 27074 / LMG 4051 / NBRC 15346 / NCIMB 9279 / VKM B-1422 / R1).